The chain runs to 352 residues: 3-isopropylmalate dehydrogenase (352 aa).

Residues arginine 96, arginine 106, arginine 134, and aspartate 220 each contribute to the substrate site. Aspartate 220, aspartate 244, and aspartate 248 together coordinate Mg(2+). Residue 277–289 (GSAPDIAGKNLAN) coordinates NAD(+).

This sequence belongs to the isocitrate and isopropylmalate dehydrogenases family. LeuB type 1 subfamily. Homodimer. Mg(2+) is required as a cofactor. It depends on Mn(2+) as a cofactor.

Its subcellular location is the cytoplasm. It catalyses the reaction (2R,3S)-3-isopropylmalate + NAD(+) = 4-methyl-2-oxopentanoate + CO2 + NADH. The protein operates within amino-acid biosynthesis; L-leucine biosynthesis; L-leucine from 3-methyl-2-oxobutanoate: step 3/4. Catalyzes the oxidation of 3-carboxy-2-hydroxy-4-methylpentanoate (3-isopropylmalate) to 3-carboxy-4-methyl-2-oxopentanoate. The product decarboxylates to 4-methyl-2 oxopentanoate. The protein is 3-isopropylmalate dehydrogenase of Desulfitobacterium hafniense (strain Y51).